Here is a 51-residue protein sequence, read N- to C-terminus: uncharacterized protein (51 aa).

Positions 1 to 51 are disordered; the sequence is MKRKAEVNEAIKNNNTPTESMDPNSYKTQYHDDPNFRGANRNSKQGQQGGM. 2 stretches are compositionally biased toward polar residues: residues 11 to 28 and 40 to 51; these read IKNNNTPTESMDPNSYKT and NRNSKQGQQGGM.

This is an uncharacterized protein from Bacillus subtilis (strain 168).